We begin with the raw amino-acid sequence, 93 residues long: Large ribosomal subunit protein bL27 (93 aa).

A propeptide spanning residues 1 to 9 (MLRLDLQFF) is cleaved from the precursor.

It belongs to the bacterial ribosomal protein bL27 family. Post-translationally, the N-terminus is cleaved by ribosomal processing cysteine protease Prp.

The sequence is that of Large ribosomal subunit protein bL27 from Bacillus licheniformis (strain ATCC 14580 / DSM 13 / JCM 2505 / CCUG 7422 / NBRC 12200 / NCIMB 9375 / NCTC 10341 / NRRL NRS-1264 / Gibson 46).